The primary structure comprises 342 residues: D-erythrose-4-phosphate dehydrogenase (342 aa).

NAD(+) is bound at residue 12-13 (RI). Substrate contacts are provided by residues 154 to 156 (SCT), Arg200, 213 to 214 (TK), and Arg236. Residue Cys155 is the Nucleophile of the active site. Asn318 is an NAD(+) binding site.

It belongs to the glyceraldehyde-3-phosphate dehydrogenase family. Epd subfamily. As to quaternary structure, homotetramer.

Its subcellular location is the cytoplasm. The catalysed reaction is D-erythrose 4-phosphate + NAD(+) + H2O = 4-phospho-D-erythronate + NADH + 2 H(+). The protein operates within cofactor biosynthesis; pyridoxine 5'-phosphate biosynthesis; pyridoxine 5'-phosphate from D-erythrose 4-phosphate: step 1/5. In terms of biological role, catalyzes the NAD-dependent conversion of D-erythrose 4-phosphate to 4-phosphoerythronate. This chain is D-erythrose-4-phosphate dehydrogenase, found in Salmonella arizonae (strain ATCC BAA-731 / CDC346-86 / RSK2980).